The primary structure comprises 217 residues: GTP cyclohydrolase 1 (217 aa).

Residues cysteine 109, histidine 112, and cysteine 180 each coordinate Zn(2+).

This sequence belongs to the GTP cyclohydrolase I family. As to quaternary structure, toroid-shaped homodecamer, composed of two pentamers of five dimers.

The enzyme catalyses GTP + H2O = 7,8-dihydroneopterin 3'-triphosphate + formate + H(+). Its pathway is cofactor biosynthesis; 7,8-dihydroneopterin triphosphate biosynthesis; 7,8-dihydroneopterin triphosphate from GTP: step 1/1. The polypeptide is GTP cyclohydrolase 1 (Photobacterium profundum (strain SS9)).